The sequence spans 291 residues: rRNA 2'-O-methyltransferase fibrillarin (291 aa).

Composition is skewed to basic and acidic residues over residues methionine 1–lysine 12 and phenylalanine 20–glycine 29. Residues methionine 1–arginine 45 are disordered. Residues arginine 28 and arginine 62 each carry the asymmetric dimethylarginine modification. S-adenosyl-L-methionine-binding positions include threonine 134–threonine 135, glutamate 153–phenylalanine 154, aspartate 178–alanine 179, and aspartate 198–glutamine 201.

It belongs to the methyltransferase superfamily. Fibrillarin family. In terms of assembly, component of box C/D small nucleolar ribonucleoprotein (snoRNP) particles.

The protein localises to the nucleus. Its subcellular location is the nucleolus. It carries out the reaction L-glutaminyl-[histone H2A] + S-adenosyl-L-methionine = N(5)-methyl-L-glutaminyl-[histone H2A] + S-adenosyl-L-homocysteine + H(+). S-adenosyl-L-methionine-dependent methyltransferase that has the ability to methylate both RNAs and proteins. Involved in pre-rRNA processing. Utilizes the methyl donor S-adenosyl-L-methionine to catalyze the site-specific 2'-hydroxyl methylation of ribose moieties in pre-ribosomal RNA. Site specificity is provided by a guide RNA that base pairs with the substrate. Methylation occurs at a characteristic distance from the sequence involved in base pairing with the guide RNA. Also acts as a protein methyltransferase by mediating methylation of 'Gln-105' of histone H2A (H2AQ105me), a modification that impairs binding of the FACT complex and is specifically present at 35S ribosomal DNA locus. This Encephalitozoon cuniculi (strain GB-M1) (Microsporidian parasite) protein is rRNA 2'-O-methyltransferase fibrillarin (NOP1).